A 340-amino-acid polypeptide reads, in one-letter code: DNA-directed RNA polymerase subunit alpha (340 aa).

The tract at residues 1–233 (MIRDEISVST…DLFIPFLRAE (233 aa)) is alpha N-terminal domain (alpha-NTD). An alpha C-terminal domain (alpha-CTD) region spans residues 268-340 (AFKHIFIDQS…DLPKNKFQIH (73 aa)).

The protein belongs to the RNA polymerase alpha chain family. In plastids the minimal PEP RNA polymerase catalytic core is composed of four subunits: alpha, beta, beta', and beta''. When a (nuclear-encoded) sigma factor is associated with the core the holoenzyme is formed, which can initiate transcription.

It is found in the plastid. The protein resides in the chloroplast. It catalyses the reaction RNA(n) + a ribonucleoside 5'-triphosphate = RNA(n+1) + diphosphate. DNA-dependent RNA polymerase catalyzes the transcription of DNA into RNA using the four ribonucleoside triphosphates as substrates. The protein is DNA-directed RNA polymerase subunit alpha of Cycas taitungensis (Prince sago).